The primary structure comprises 699 residues: MNDERLVAINFEQQIFSKISEISESVGRAIRYCKEDGKVEGCETASHVDFLNHIHLLLGNYNNDLASSIEKKKSELIVRNSEGLPVMDIHEEVDKDGNIISASVAPQRISSVIDYADVFRSLPGFKNIENGGNRDTSSRIEELSEEEINDSTKNINYKAPEMGSLPSNTEFTSTPTLGVSEFPSKHGDHSDSKTYESPISNSQAASLSDSDMVQQIKNGSKTSLFKKGFLFKKNNAMQNRTTSNIKSNASAIEKNKETILNALNNSTLNENGHQDTQNEVLRDIVLEHPTAKAQDTGESNKDNNTSTSKHKKRPKRLSKFKQAKLETKKSGNKDHATSSEKLSLGNESIHSINETRSSSIEEPDNADNKIVEEEPMLLPVPTTAQGQNVLEAVQYDGLDSLEDMEALIQEMEEEGELDDNSESEEDEHGMTIGFSKELKAPPDPQYFTEKTGATTYVNGNDESLNVSDFPQIVEQEELSSKNPRKVHFSDTLEIKHVSRSGKANIEVIPAPTEEYDNLFGPDDFQSRISAFRKARSKLRAKENEEGNHSNATCTIKNDDLSNTLNNRAANTKLNPKEEDKSTVESELKAPPKEKSSETSKEYLNEPSVVKDFVVERTPSDKISESKEAFDAKVEEISDQRAISQRYYELRKKMIDNTGEYIKDEEEQAVIPLDENGNEKPKMSRFMTARLRGRVPIYEH.

Disordered regions lie at residues 175 to 208 (PTLG…ASLS), 289 to 364 (PTAK…EEPD), and 539 to 603 (RAKE…KEYL). Residues 183-194 (PSKHGDHSDSKT) show a composition bias toward basic and acidic residues. Over residues 195 to 208 (YESPISNSQAASLS) the composition is skewed to polar residues. The segment covering 308–322 (SKHKKRPKRLSKFKQ) has biased composition (basic residues). The segment covering 323–338 (AKLETKKSGNKDHATS) has biased composition (basic and acidic residues). 2 stretches are compositionally biased toward polar residues: residues 339-360 (SEKL…SSSI) and 548-573 (HSNA…NTKL). Basic and acidic residues predominate over residues 574–603 (NPKEEDKSTVESELKAPPKEKSSETSKEYL).

The protein localises to the cytoplasm. This is an uncharacterized protein from Schizosaccharomyces pombe (strain 972 / ATCC 24843) (Fission yeast).